Consider the following 341-residue polypeptide: Geranylgeranyl transferase type-2 subunit beta (341 aa).

6 PFTB repeats span residues 15–55 (KSKH…ITMN), 62–104 (QQDV…KIYD), 122–163 (RERL…SLLN), 170–211 (ADTA…AIMN), 223–264 (VKLI…SILK), and 271–313 (LKIL…SLID). Geranylgeranyl diphosphate is bound by residues 196-198 (HAA) and 243-255 (RPEK…YSWW). Residues D249, C251, and H301 each coordinate Zn(2+).

It belongs to the protein prenyltransferase subunit beta family. As to quaternary structure, heterodimer of an alpha and a beta subunit. It depends on Zn(2+) as a cofactor.

It carries out the reaction geranylgeranyl diphosphate + L-cysteinyl-[protein] = S-geranylgeranyl-L-cysteinyl-[protein] + diphosphate. Functionally, catalyzes the transfer of a geranyl-geranyl moiety from geranyl-geranyl pyrophosphate to proteins having the C-terminal -XCC or -XCXC, where both cysteines may become modified. Acts on YPT1 and SEC4. In Candida albicans (Yeast), this protein is Geranylgeranyl transferase type-2 subunit beta (BET2).